Consider the following 601-residue polypeptide: Abscisic acid cluster transcription factor abl7 (601 aa).

A DNA-binding region (zn(2)-C6 fungal-type) is located at residues 13-40 (CDECRRRKLKCDRVRPQCGTCALSESEC).

Its subcellular location is the nucleus. Functionally, transcription factor that regulates the expression of the gene cluster that mediates the biosynthesis of abscisic acid (ABA), a phytohormone that acts antagonistically toward salicylic acid (SA), jasmonic acid (JA) and ethylene (ETH) signaling, to impede plant defense responses. This chain is Abscisic acid cluster transcription factor abl7, found in Leptosphaeria maculans (strain JN3 / isolate v23.1.3 / race Av1-4-5-6-7-8) (Blackleg fungus).